The primary structure comprises 339 residues: Glycerol-3-phosphate dehydrogenase [NAD(P)+] (339 aa).

NADPH-binding residues include Ser-15, Tyr-16, His-36, and Lys-110. Sn-glycerol 3-phosphate is bound by residues Lys-110, Gly-139, and Thr-141. Ala-143 is a binding site for NADPH. 5 residues coordinate sn-glycerol 3-phosphate: Lys-195, Asp-248, Ser-258, Arg-259, and Asn-260. Residue Lys-195 is the Proton acceptor of the active site. Arg-259 lines the NADPH pocket. NADPH is bound by residues Val-283 and Glu-285.

Belongs to the NAD-dependent glycerol-3-phosphate dehydrogenase family.

Its subcellular location is the cytoplasm. The enzyme catalyses sn-glycerol 3-phosphate + NAD(+) = dihydroxyacetone phosphate + NADH + H(+). It catalyses the reaction sn-glycerol 3-phosphate + NADP(+) = dihydroxyacetone phosphate + NADPH + H(+). The protein operates within membrane lipid metabolism; glycerophospholipid metabolism. Its function is as follows. Catalyzes the reduction of the glycolytic intermediate dihydroxyacetone phosphate (DHAP) to sn-glycerol 3-phosphate (G3P), the key precursor for phospholipid synthesis. In Klebsiella pneumoniae (strain 342), this protein is Glycerol-3-phosphate dehydrogenase [NAD(P)+].